We begin with the raw amino-acid sequence, 349 residues long: Inhibitor of nuclear factor kappa-B kinase-interacting protein (349 aa).

Over residues 1 to 11 (MSEVKSRKKSG) the composition is skewed to basic residues. The tract at residues 1 to 39 (MSEVKSRKKSGTKGAPAEPGKRNEGGKSPEARGGGGRGW) is disordered. Residues 19-30 (PGKRNEGGKSPE) are compositionally biased toward basic and acidic residues. The helical transmembrane segment at 45 to 61 (GVSLLSLGTCLGLAWFV) threads the bilayer. Asn145 carries an N-linked (GlcNAc...) asparagine glycan. Coiled-coil stretches lie at residues 183–216 (GLVT…IGDL) and 304–347 (IGRL…HISD). A glycan (N-linked (GlcNAc...) asparagine) is linked at Asn327.

N-glycosylated.

The protein localises to the endoplasmic reticulum membrane. Its function is as follows. Target of p53/TP53 with pro-apoptotic function. The chain is Inhibitor of nuclear factor kappa-B kinase-interacting protein (IKBIP) from Bos taurus (Bovine).